The primary structure comprises 355 residues: Guanine nucleotide-binding protein subunit alpha-14 (355 aa).

Positions 34 to 355 constitute a G-alpha domain; the sequence is RELKLLLLGT…QLNLREFNLV (322 aa). Residues 37–50 are G1 motif; sequence KLLLLGTGESGKST. GTP-binding positions include 42 to 49, 176 to 182, 201 to 205, 270 to 273, and Ala327; these read GTGESGKS, LRVRVPT, DVGGQ, and NKKD. Residues Ser49 and Thr182 each coordinate Mg(2+). Residues 174-182 form a G2 motif region; it reads DVLRVRVPT. Residues 197–206 are G3 motif; it reads FRMVDVGGQR. Residues 266–273 form a G4 motif region; the sequence is ILFLNKKD. The interval 325–330 is G5 motif; that stretch reads TCATDT.

It belongs to the G-alpha family. G(q) subfamily. As to quaternary structure, g proteins are composed of 3 units; alpha, beta and gamma. The alpha chain contains the guanine nucleotide binding site.

Guanine nucleotide-binding proteins (G proteins) are involved as modulators or transducers in various transmembrane signaling systems. This chain is Guanine nucleotide-binding protein subunit alpha-14 (GNA14), found in Bos taurus (Bovine).